A 730-amino-acid polypeptide reads, in one-letter code: Rap1 GTPase-activating protein 2 (730 aa).

S7 bears the Phosphoserine; by PKG/PRKG1; in vitro mark. The disordered stretch occupies residues 32–53 (ANSSDATLPDRPLSPPLTAPPT). The residue at position 45 (S45) is a Phosphoserine. Position 49 is a phosphothreonine (T49). In terms of domain architecture, Rap-GAP spans 248 to 464 (IVSYDEHEVN…RTRAALLDNL (217 aa)). Phosphoserine is present on S507. The interval 509–533 (ETMVGGQKKSHSGGIPGSLSGGISH) is disordered. Residues S544, S558, S564, S612, and S613 each carry the phosphoserine modification. The tract at residues 552 to 730 (VKNQSRSPIK…LSHASSGAGH (179 aa)) is disordered. Positions 585 to 613 (DSTSSTPKTPDGGHSSQEIKSETSSNPSS) are enriched in polar residues. Residues 618-631 (PNKEKPFMKLKENG) are compositionally biased toward basic and acidic residues. The span at 635–647 (SRSSSSTSSVSST) shows a compositional bias: low complexity. The span at 661–670 (GSQPSTTSPF) shows a compositional bias: polar residues. Low complexity predominate over residues 678–687 (SPSPSSESPS). The segment covering 699-712 (RSPTDAKSRNSPRS) has biased composition (polar residues).

Post-translationally, in vitro phosphorylated by cGMP-dependent protein kinase 1 (cGKI) at Ser-7; the phosphorylation probably does not regulate GAP activity. In terms of tissue distribution, isoform 1 and isoform 2 are expressed in platelets with isoform 2 being the predominant form. Expressed in lymphocytes, heart, testis and pancreas.

The protein resides in the cytoplasm. It localises to the perinuclear region. Its function is as follows. GTPase activator for the nuclear Ras-related regulatory protein RAP-1A (KREV-1), converting it to the putatively inactive GDP-bound state. In Homo sapiens (Human), this protein is Rap1 GTPase-activating protein 2 (RAP1GAP2).